The chain runs to 90 residues: U7-theraphotoxin-Hhn1a 3 (90 aa).

The signal sequence occupies residues 1-26; it reads MKTAIFTVVLALAVFAVLSFGWEANG. Positions 27 to 50 are excised as a propeptide; the sequence is KALSEEFTELIHEKEAASETEARE. 3 disulfide bridges follow: Cys-51–Cys-65, Cys-58–Cys-70, and Cys-64–Cys-81.

It belongs to the neurotoxin 10 (Hwtx-1) family. 13 (Hntx-13) subfamily. In terms of tissue distribution, expressed by the venom gland.

It localises to the secreted. Functionally, ion channel inhibitor. In Cyriopagopus hainanus (Chinese bird spider), this protein is U7-theraphotoxin-Hhn1a 3.